Reading from the N-terminus, the 675-residue chain is UvrABC system protein B (675 aa).

Residues 32–417 form the Helicase ATP-binding domain; sequence EGLSDGLAYQ…EHAGQVVEQV (386 aa). 45–52 contributes to the ATP binding site; sequence GVTGSGKT. Positions 98–121 match the Beta-hairpin motif; the sequence is YYDYYQPEAYVPSRDLFIEKDSAI. The 167-residue stretch at 436 to 602 folds into the Helicase C-terminal domain; it reads QVDDLMSEIN…QIKKQVKDII (167 aa). Positions 634 to 669 constitute a UVR domain; it reads IKEIAKLEKAMQQAARDLQFEEAAVLRDRIRDIKEN.

Belongs to the UvrB family. Forms a heterotetramer with UvrA during the search for lesions. Interacts with UvrC in an incision complex.

The protein resides in the cytoplasm. Its function is as follows. The UvrABC repair system catalyzes the recognition and processing of DNA lesions. A damage recognition complex composed of 2 UvrA and 2 UvrB subunits scans DNA for abnormalities. Upon binding of the UvrA(2)B(2) complex to a putative damaged site, the DNA wraps around one UvrB monomer. DNA wrap is dependent on ATP binding by UvrB and probably causes local melting of the DNA helix, facilitating insertion of UvrB beta-hairpin between the DNA strands. Then UvrB probes one DNA strand for the presence of a lesion. If a lesion is found the UvrA subunits dissociate and the UvrB-DNA preincision complex is formed. This complex is subsequently bound by UvrC and the second UvrB is released. If no lesion is found, the DNA wraps around the other UvrB subunit that will check the other stand for damage. This chain is UvrABC system protein B, found in Neisseria meningitidis serogroup B (strain ATCC BAA-335 / MC58).